The following is a 613-amino-acid chain: Spastin (613 aa).

A disordered region spans residues 1-42; sequence MNSPGGRGKKKGSAGSSSAPPAAGASPSAPSGPAPPAPPAGA. Over 1–61 the chain is Cytoplasmic; sequence MNSPGGRGKK…KRNLYYFSYP (61 aa). The span at 13 to 29 shows a compositional bias: low complexity; it reads SAGSSSAPPAAGASPSA. A compositionally biased stretch (pro residues) spans 30 to 39; it reads PSGPAPPAPP. Residues 62-82 constitute an intramembrane region (helical); the sequence is LFAAFALLRFVAFQLGLLVAW. The Cytoplasmic segment spans residues 83–613; that stretch reads LCERLSRGAL…WNKDFGDTTV (531 aa). The region spanning 117 to 192 is the MIT domain; it reads HKRAFECISM…AMAKDRLQLL (76 aa). Positions 224 to 312 are disordered; sequence SESGAVPKKK…PAARKKKDTK (89 aa). Composition is skewed to polar residues over residues 237–257, 264–274, and 281–299; these read THTSNSLPRSKTVAKTGSTGL, PSYSGISTASV, and PATSTHKAAPKNSRTNKPS. 379–386 contributes to the ATP binding site; it reads GPPGNGKT.

It belongs to the AAA ATPase family. Spastin subfamily. Homohexamer. The homohexamer is stabilized by ATP-binding. The homohexamer may adopt a ring conformation through which microtubules pass prior to being severed. Interacts with microtubules.

It is found in the membrane. The protein localises to the cytoplasm. Its subcellular location is the cytoskeleton. The protein resides in the microtubule organizing center. It localises to the centrosome. It is found in the perinuclear region. The protein localises to the nucleus. The catalysed reaction is n ATP + n H2O + a microtubule = n ADP + n phosphate + (n+1) alpha/beta tubulin heterodimers.. ATP-dependent microtubule severing protein that specifically recognizes and cuts microtubules that are polyglutamylated. Preferentially recognizes and acts on microtubules decorated with short polyglutamate tails: severing activity increases as the number of glutamates per tubulin rises from one to eight, but decreases beyond this glutamylation threshold. Microtubule severing promotes reorganization of cellular microtubule arrays and the release of microtubules from the centrosome following nucleation. Required for membrane traffic from the endoplasmic reticulum (ER) to the Golgi and for completion of the abscission stage of cytokinesis. Also plays a role in axon growth and the formation of axonal branches. The chain is Spastin from Gallus gallus (Chicken).